Consider the following 84-residue polypeptide: Small ribosomal subunit protein uS17 (84 aa).

This sequence belongs to the universal ribosomal protein uS17 family. As to quaternary structure, part of the 30S ribosomal subunit.

Its function is as follows. One of the primary rRNA binding proteins, it binds specifically to the 5'-end of 16S ribosomal RNA. This chain is Small ribosomal subunit protein uS17, found in Erwinia tasmaniensis (strain DSM 17950 / CFBP 7177 / CIP 109463 / NCPPB 4357 / Et1/99).